We begin with the raw amino-acid sequence, 259 residues long: Protein-tyrosine phosphatase RolB (259 aa).

The segment at 219–259 (GISRPAASSPEPDLTLRLSGPDQEGEEGVMKPAAVNLKKEA) is disordered.

It carries out the reaction O-phospho-L-tyrosyl-[protein] + H2O = L-tyrosyl-[protein] + phosphate. In terms of biological role, induces differentiation and growth of neoplastic roots (hairy roots). Seems to function as a tyrosine phosphatase. The sequence is that of Protein-tyrosine phosphatase RolB (rolB) from Rhizobium rhizogenes (Agrobacterium rhizogenes).